Here is a 425-residue protein sequence, read N- to C-terminus: Serine--tRNA ligase (425 aa).

An L-serine-binding site is contributed by 231-233 (TAE). 262–264 (RSE) provides a ligand contact to ATP. Glu-285 lines the L-serine pocket. An ATP-binding site is contributed by 349–352 (EISS). Residue Ser-385 participates in L-serine binding.

The protein belongs to the class-II aminoacyl-tRNA synthetase family. Type-1 seryl-tRNA synthetase subfamily. Homodimer. The tRNA molecule binds across the dimer.

Its subcellular location is the cytoplasm. It catalyses the reaction tRNA(Ser) + L-serine + ATP = L-seryl-tRNA(Ser) + AMP + diphosphate + H(+). The catalysed reaction is tRNA(Sec) + L-serine + ATP = L-seryl-tRNA(Sec) + AMP + diphosphate + H(+). It participates in aminoacyl-tRNA biosynthesis; selenocysteinyl-tRNA(Sec) biosynthesis; L-seryl-tRNA(Sec) from L-serine and tRNA(Sec): step 1/1. Its function is as follows. Catalyzes the attachment of serine to tRNA(Ser). Is also able to aminoacylate tRNA(Sec) with serine, to form the misacylated tRNA L-seryl-tRNA(Sec), which will be further converted into selenocysteinyl-tRNA(Sec). The sequence is that of Serine--tRNA ligase from Exiguobacterium sibiricum (strain DSM 17290 / CCUG 55495 / CIP 109462 / JCM 13490 / 255-15).